A 634-amino-acid polypeptide reads, in one-letter code: Threonine--tRNA ligase (634 aa).

One can recognise a TGS domain in the interval 1 to 61 (MINIRFPDGS…NSNCELRLIT (61 aa)). Residues 241–532 (DHRKIGKVLD…LIEHYAGNLP (292 aa)) are catalytic. The Zn(2+) site is built by Cys332, His383, and His509.

This sequence belongs to the class-II aminoacyl-tRNA synthetase family. Homodimer. Zn(2+) serves as cofactor.

Its subcellular location is the cytoplasm. The catalysed reaction is tRNA(Thr) + L-threonine + ATP = L-threonyl-tRNA(Thr) + AMP + diphosphate + H(+). Functionally, catalyzes the attachment of threonine to tRNA(Thr) in a two-step reaction: L-threonine is first activated by ATP to form Thr-AMP and then transferred to the acceptor end of tRNA(Thr). Also edits incorrectly charged L-seryl-tRNA(Thr). This Francisella tularensis subsp. holarctica (strain FTNF002-00 / FTA) protein is Threonine--tRNA ligase.